Consider the following 464-residue polypeptide: Armadillo repeat-containing protein 6 homolog (464 aa).

Phosphothreonine is present on T9. 4 ARM repeats span residues A235–V275, G287–V331, A332–G374, and I375–G418.

The protein belongs to the ARMC6 family.

The protein is Armadillo repeat-containing protein 6 homolog of Drosophila melanogaster (Fruit fly).